Consider the following 378-residue polypeptide: Erythronate-4-phosphate dehydrogenase (378 aa).

Residues Ser45 and Thr66 each coordinate substrate. NAD(+) is bound by residues Asp146 and Thr175. The active site involves Arg208. Residue Asp232 participates in NAD(+) binding. Glu237 is an active-site residue. The active-site Proton donor is His254. Position 257 (Gly257) interacts with NAD(+). Tyr258 is a substrate binding site.

Belongs to the D-isomer specific 2-hydroxyacid dehydrogenase family. PdxB subfamily. In terms of assembly, homodimer.

Its subcellular location is the cytoplasm. The enzyme catalyses 4-phospho-D-erythronate + NAD(+) = (R)-3-hydroxy-2-oxo-4-phosphooxybutanoate + NADH + H(+). It functions in the pathway cofactor biosynthesis; pyridoxine 5'-phosphate biosynthesis; pyridoxine 5'-phosphate from D-erythrose 4-phosphate: step 2/5. Catalyzes the oxidation of erythronate-4-phosphate to 3-hydroxy-2-oxo-4-phosphonooxybutanoate. The protein is Erythronate-4-phosphate dehydrogenase of Salmonella arizonae (strain ATCC BAA-731 / CDC346-86 / RSK2980).